Here is a 223-residue protein sequence, read N- to C-terminus: MDLASLRAQQIELASSVCREDRLDKDPPAFIGGADVGFEQGGEVTRAAMVLLKYPSLELVEYKVARIATTMPYIPGFLSFREYPALLAAWEQLSQKPDLLFVDGHGISHPRRLGVASHFGLLVDVPTIGVAKKRLCGKFEPLSAEPGALSPLMDKGEQLAWVWRSKARCNPLFIATGHRVSTDSALAWVQRCMKGYRLPEPTRWADAVASGRPAFVRWQEIQR.

Positions 35 and 103 each coordinate Mg(2+).

The protein belongs to the endonuclease V family. Mg(2+) serves as cofactor.

It localises to the cytoplasm. It carries out the reaction Endonucleolytic cleavage at apurinic or apyrimidinic sites to products with a 5'-phosphate.. In terms of biological role, DNA repair enzyme involved in the repair of deaminated bases. Selectively cleaves double-stranded DNA at the second phosphodiester bond 3' to a deoxyinosine leaving behind the intact lesion on the nicked DNA. The chain is Endonuclease V from Salmonella agona (strain SL483).